We begin with the raw amino-acid sequence, 257 residues long: MSAPFRFPRFFVTSPAPCPYLAGRTERKVFTELSGNNATELNDALGRIGFRRSQSVAYRPSCADCSACVSVRVCASEFAPSNSQKRTLRRNGDLVVTACKPWATEEQYALLRSYLASRHPDGGMADMDEQDFADMVEQTPVDSYMIEYREPVAGGGKGRLVGCCLTDRQGDGLSMIYSFFDAHHPLREGLGTYIIADHVLRAAKAGLPYVYLGYWIEGSARMAYKARFRPLEKLGPDGWSRFEPTPSERIAAMFELA.

Belongs to the R-transferase family. Bpt subfamily.

The protein localises to the cytoplasm. It catalyses the reaction N-terminal L-glutamyl-[protein] + L-leucyl-tRNA(Leu) = N-terminal L-leucyl-L-glutamyl-[protein] + tRNA(Leu) + H(+). It carries out the reaction N-terminal L-aspartyl-[protein] + L-leucyl-tRNA(Leu) = N-terminal L-leucyl-L-aspartyl-[protein] + tRNA(Leu) + H(+). Functions in the N-end rule pathway of protein degradation where it conjugates Leu from its aminoacyl-tRNA to the N-termini of proteins containing an N-terminal aspartate or glutamate. This chain is Aspartate/glutamate leucyltransferase, found in Sphingopyxis alaskensis (strain DSM 13593 / LMG 18877 / RB2256) (Sphingomonas alaskensis).